The sequence spans 86 residues: Elicitor peptide 5 (86 aa).

A propeptide spanning residues 1–59 is cleaved from the precursor; that stretch reads MQQERDHKRDCCKLMPQTVKAFFKCLRFRRSSSSSSDMVKARARNEEKEEPSSIETSTR. The interval 31–86 is disordered; it reads SSSSSSDMVKARARNEEKEEPSSIETSTRSLNVMRKGIRKQPVSSGKRGGVNDYDM. The segment covering 39-51 has biased composition (basic and acidic residues); that stretch reads VKARARNEEKEEP.

This sequence belongs to the brassicaceae elicitor peptide family.

In terms of biological role, elicitor of plant defense. In Arabidopsis thaliana (Mouse-ear cress), this protein is Elicitor peptide 5 (PEP5).